A 1833-amino-acid chain; its full sequence is MKKEASELLGFSPQKDIVYNELLPYKDKLDDESNEILAQIKGNLGRAVQLREVWPGVLFWTRKLSTYIRLYGRKFNKEDHVLFVKLLYELVTIPKLEISMMQSFARLLITLLKKKELLSREDLELPWRPLYELQDRILYSKTEHLGLNWFPSSVEAVLKVLIKSCRPYFPESATQEMLDEWKPLMCPFDVTMQKAMGYFELFLPTTLPPELHDKGFKLWFDDLISLWVSVQNLPSWEVNLVSLFARLANDNIGYIDWDPYIPKIFTRILRSLNLPVGSSQMLVSRYLTNAYDISYVVIWISALLGGPSKQAQTQLSGLFNGITSFFHPSNHGRWLMKLMKLLQRLPASVVKRLHRERYRTPTWLTPIPESHLLSEQDITDFVESIKQPVLLAMFSKTGSLDAAQALQNLALLRPELVIPPVLEKTYPAMETLIEPHQLTATLSCMIGVARSLVAGGQRFPEGPKHMLPLLMRALPGVDPNDFSKCMITFQFLATFVTLVPLVDCSSAIHSRNGLTQVEKELCSASAEFEHFVLQFVDRCFALIDTSTLEQTREEMEMEKMTHLESLVELGLSSTFSTILTQCSMEIFQVALDKVFNFATTSIFETHVAGRMVADMCRATTKCHPAEALKLFLPHCCSAILQIAANEEVLNEEELDKELMWNLQLLSEVVRVDGDQLLLYRSQLVQILQLTLHLKCKQGYSLACKLLYHILRSMSLIYPREYCSIPGGIQQHTDTYLPIQDWGRPGELWNLEIQWHVPSTEETEFVFYLLDLLLKPELQRLQKHTEGQQDISRDDVLQSLSIVHNCFLGASSLLPPLHGEPVPQLINGMVQLYETKVYTGVDYDMSRENYREDICKVIRPLLNHTLEHSEDDIKSLFSIIKIINDLLHFKGSHKNEFDTRWKSFNLIKKSMENRLHGSKQHIRALLIDRVMLQHELRNLTMEGCSYRSVHQDLINDLLRLSTSRYSQVRCRAQNVLFTALGTYNFCCRDIIPVVLKYLDPERTDVTQQQFKGALYCLLGNHSGICLANLQYWDCIALTWPALVRSGMSPSMSLEKTSIVRLFDDLADKIHRQYETISVNFSIPESCVEIAVKMLKSSSPEPNPGAASEQEELEGRKREEQKNKDAMQKYEKLVADLLDCLHDRNIPWKFEQLTIGFLSLMLRDDLPLPSSAVLFFVESLNHDSLLVRNVAISAVAGILKQLKRPHKKVAVSPYDISELKTSLQSPVVSLLTGDRPDNQWLQYDSSRLPRSQRDWDECCFIEKTHWGYSTWPRKLMLYAPLEEQPKQGQTREEMNEREQIIYDHFSDQLFIDQFIQYLSLEDRKGKDKFSPRRFCLFKGLFRNFDDAFLPLLKPHMERLVADSHESPQRCVAEIISGLIRGSKHWSYSKVEKLWALLCPLLRKALSNITIETYIDWGTCIATACESRDPRKLHWLFEMLMESPVTGEGGSFVDACRLYVLQGGLAQQEWRVPELLHRLLQYLEPKLTQVYKNVRERIGSVLTYIFMIDVDLPYTQPTTSPRIREFTERVLARLKPLTEGEEEIQNHIVEENMEGDQDERTQAIKLLKTVLKWLMTSAGRSFSSSVPEQLRLLPLLFKIAPVENDDSYDEMKTDAKTCLSLMSQGLLYSDQIPQVLSALEEISRSSSWHARYTILTYLQIMVFYNLFTFLSDAKAVCDVRALVLRLLEDEQLEVREMAATTLSGFLQCNFLSIDEPMQAHFESLSKTRLPKRKRRELGSVVDTIPSADLVRRHAGVLGLSACILSSPYDVPTWMPQILMDLSAHLNDTQPIEMTVKKTLSDFRRTHHDNWQEHKQKFTDDQLLVLTDLLVSPCYYA.

HEAT repeat units lie at residues 460–504 (PEGP…LVDC) and 983–1022 (NFCC…NHSG). Residues 1095-1122 (SSSPEPNPGAASEQEELEGRKREEQKNK) form a disordered region. Basic and acidic residues predominate over residues 1111–1122 (LEGRKREEQKNK). HEAT repeat units lie at residues 1164-1202 (LPLP…QLKR), 1344-1382 (DAFL…GSKH), 1626-1664 (SDQI…YNLF), and 1670-1708 (AKAV…CNFL). The bromodomain-like (BRDL) stretch occupies residues 1640 to 1728 (SRSSSWHARY…ESLSKTRLPK (89 aa)).

The protein belongs to the BLM10 family. In terms of assembly, homodimer. Interacts with the 20S and 26S proteasomes.

The protein resides in the cytoplasm. Its subcellular location is the cytosol. The protein localises to the nucleus. It is found in the nucleus speckle. Its function is as follows. Associated component of the proteasome that specifically recognizes acetylated histones and promotes ATP- and ubiquitin-independent degradation of core histones during DNA damage response. Recognizes and binds acetylated histones via its bromodomain-like (BRDL) region and activates the proteasome by opening the gated channel for substrate entry. Binds to the core proteasome via its C-terminus, which occupies the same binding sites as the proteasomal ATPases, opening the closed structure of the proteasome via an active gating mechanism. involved in DNA damage response in somatic cells: binds to acetylated histones and promotes degradation of histones. In Danio rerio (Zebrafish), this protein is Proteasome activator complex subunit 4A (psme4a).